Here is a 586-residue protein sequence, read N- to C-terminus: uncharacterized protein (586 aa).

Positions 1–115 are disordered; sequence MRVLVAETGR…NTEKLAGRDD (115 aa). Basic and acidic residues predominate over residues 8–20; it reads TGREDNVSVHSRE. Residues 21–31 are compositionally biased toward polar residues; that stretch reads VSVNGSDSGTG. Basic and acidic residues predominate over residues 35 to 44; that stretch reads YKLETDDEHP. The span at 76–107 shows a compositional bias: polar residues; the sequence is TGMNTEYNDDNSSLVNTPRDSTTYAETNSPNT. WD repeat units follow at residues 184 to 223, 253 to 291, 293 to 333, 335 to 374, 387 to 430, and 432 to 474; these read QFKE…ERRE, GHNA…SLAV, RHNE…ILHW, ELEY…YVSS, CRVT…LVLK, and SDAH…LINA.

Its subcellular location is the cytoplasm. The protein resides in the nucleus. This is an uncharacterized protein from Schizosaccharomyces pombe (strain 972 / ATCC 24843) (Fission yeast).